The primary structure comprises 482 residues: Replication factor C large subunit (482 aa).

46–53 contributes to the ATP binding site; that stretch reads GPPGSGKT. The interval 420 to 482 is disordered; sequence EKETPKKKKK…KKQATLDSFF (63 aa). The span at 442-476 shows a compositional bias: basic and acidic residues; that stretch reads KISEPPKEPLKEVIEETVEKTDKKEKEKKDPKKQA.

The protein belongs to the activator 1 small subunits family. RfcL subfamily. Heteromultimer composed of small subunits (RfcS) and large subunits (RfcL).

Functionally, part of the RFC clamp loader complex which loads the PCNA sliding clamp onto DNA. The sequence is that of Replication factor C large subunit from Methanococcus maripaludis (strain C7 / ATCC BAA-1331).